The chain runs to 712 residues: 1,4-alpha-glucan branching enzyme GlgB (712 aa).

The active-site Nucleophile is the Asp397. Glu450 (proton donor) is an active-site residue.

It belongs to the glycosyl hydrolase 13 family. GlgB subfamily. As to quaternary structure, monomer.

The enzyme catalyses Transfers a segment of a (1-&gt;4)-alpha-D-glucan chain to a primary hydroxy group in a similar glucan chain.. It participates in glycan biosynthesis; glycogen biosynthesis. Catalyzes the formation of the alpha-1,6-glucosidic linkages in glycogen by scission of a 1,4-alpha-linked oligosaccharide from growing alpha-1,4-glucan chains and the subsequent attachment of the oligosaccharide to the alpha-1,6 position. The polypeptide is 1,4-alpha-glucan branching enzyme GlgB (Bradyrhizobium sp. (strain BTAi1 / ATCC BAA-1182)).